Consider the following 186-residue polypeptide: Translation initiation factor IF-3 (186 aa).

The tract at residues 1-20 is disordered; sequence MINRNSGKDRDRSRSGDKEL.

This sequence belongs to the IF-3 family. As to quaternary structure, monomer.

The protein resides in the cytoplasm. Functionally, IF-3 binds to the 30S ribosomal subunit and shifts the equilibrium between 70S ribosomes and their 50S and 30S subunits in favor of the free subunits, thus enhancing the availability of 30S subunits on which protein synthesis initiation begins. In Borrelia duttonii (strain Ly), this protein is Translation initiation factor IF-3.